Consider the following 1990-residue polypeptide: Protein TANC2 (1990 aa).

2 disordered regions span residues 1-85 and 129-149; these read MFRN…SVDE and SPCSTLTSSTASPPASSPCST. S169, S238, S294, and S400 each carry phosphoserine. The disordered stretch occupies residues 396–442; that stretch reads IASDSPHASPKHVDANRELPLTQPPSAHSSITSGSCPGTPEMRRRQE. Residues 419-431 show a composition bias toward polar residues; that stretch reads PPSAHSSITSGSC. 11 ANK repeats span residues 846–878, 884–913, 917–946, 950–979, 990–1019, 1033–1062, 1066–1095, 1099–1128, 1132–1161, 1165–1194, and 1198–1227; these read EGLSMALASLRNLYTPNIKVSRLLILGGANINY, NNAPILCVQSHLGYTEMVALLLEFGANVDA, SGLTPLGYAAAAGYLSIVVLLCKKRAKVDH, NGQCALVHAALRGHLEVVKFLIQCDWTMAG, AIQQALIAAASMGYTEIVSYLLDLPEKDEE, WGETALTAAAGRGKLEVCRLLLEQGAAVAQ, RGAVPLFSTVRQGHWQIVDLLLTHGADVNM, QGRTPLMMAASEGHLGTVDFLLAQGASIAL, EGLTALSWACLKGHLSVVRSLVDNGAATDH, NGRTPLDLAAFYGDAEVVQFLVDHGAMIEH, and SGMRPLDRAVGCRNTSVVVTLLKKGAKIGP. TPR repeat units follow at residues 1244-1277, 1291-1324, and 1325-1358; these read LSKLMEEGDMFYKKGKVKEAAQRYQYALKKFPRE, VSLLLNLSRCRRKMNDFGMAEEFATKALELKPKS, and YEAYYARARAKRSSRQFAAALEDLNEAIKLCPNN. Disordered stretches follow at residues 1372-1401, 1430-1586, and 1692-1718; these read CRQMQQPQQPPPPPQPQQQLPEEAEPEPQH, EARP…KMAQ, and LTKEDLPQRPSSAYRGGVRYSQTPQIG. Phosphoserine occurs at positions 1442 and 1458. Over residues 1469-1498 the composition is skewed to polar residues; the sequence is RSSSSVGSPTRQTYQSTSPALSPTHQNSHY. A phosphoserine mark is found at S1530 and S1545. The segment covering 1553–1572 has biased composition (polar residues); the sequence is VYRSQSGSPVRYQQETSVSQ. Asymmetric dimethylarginine is present on residues R1563 and R1576. Position 1579 is a phosphoserine (S1579). Residue S1722 is modified to Phosphoserine. Residues 1783 to 1798 show a composition bias toward low complexity; sequence SPSSNSISSTSNLTPT. Disordered regions lie at residues 1783 to 1803 and 1821 to 1843; these read SPSSNSISSTSNLTPTFRPSS and DELSPVSPTQGGYPSEPTRSRTT. 2 positions are modified to phosphoserine: S1824 and S1827. N-linked (GlcNAc...) asparagine glycosylation is present at N1928. The interval 1968 to 1990 is disordered; the sequence is SRDSRQGQTSPIKPKRPFVESNV.

Belongs to the TANC family. As to quaternary structure, interacts with KIF1A; the interaction decreases in presence of calcium.

It localises to the cell projection. The protein localises to the dendritic spine. In terms of biological role, scaffolding protein in the dendritic spines which acts as immobile postsynaptic posts able to recruit KIF1A-driven dense core vesicles to dendritic spines. The polypeptide is Protein TANC2 (TANC2) (Homo sapiens (Human)).